The following is a 231-amino-acid chain: Chromosome partition protein MukE (231 aa).

The segment at 204 to 231 (TPEPSQQSLLENPTAEYDEEQTEWEDEA) is disordered. Positions 219 to 231 (EYDEEQTEWEDEA) are enriched in acidic residues.

This sequence belongs to the MukE family. As to quaternary structure, interacts, and probably forms a ternary complex, with MukF and MukB. The complex formation is stimulated by calcium or magnesium.

The protein localises to the cytoplasm. It is found in the nucleoid. In terms of biological role, involved in chromosome condensation, segregation and cell cycle progression. May participate in facilitating chromosome segregation by condensation DNA from both sides of a centrally located replisome during cell division. Probably acts via its interaction with MukB and MukF. The sequence is that of Chromosome partition protein MukE from Vibrio cholerae serotype O1 (strain ATCC 39315 / El Tor Inaba N16961).